The following is a 302-amino-acid chain: Probable protein S-acyltransferase 13 (302 aa).

Helical transmembrane passes span 17-37 (SIMI…VVVV) and 56-76 (VLAF…SVVV). Positions 116–166 (RYCRKCNQYKPPRSHHCSVCGRCILKMDHHCVWVVNCVGANNYKSFLLFLF) constitute a DHHC domain. C146 acts as the S-palmitoyl cysteine intermediate in catalysis. 2 consecutive transmembrane segments (helical) span residues 166–186 (FYTF…FLVF) and 204–224 (SFVA…FLIM).

This sequence belongs to the DHHC palmitoyltransferase family.

Its subcellular location is the cell membrane. The protein localises to the cytoplasmic vesicle membrane. It carries out the reaction L-cysteinyl-[protein] + hexadecanoyl-CoA = S-hexadecanoyl-L-cysteinyl-[protein] + CoA. In terms of biological role, palmitoyl acyltransferase. The protein is Probable protein S-acyltransferase 13 (PAT13) of Arabidopsis thaliana (Mouse-ear cress).